Here is a 57-residue protein sequence, read N- to C-terminus: Lantibiotic nisin-A (57 aa).

Residues 1–23 (MSTKDFNLDLVSVSKKDSGASPR) constitute a propeptide that is removed on maturation. Thr-25 is modified ((Z)-2,3-didehydrobutyrine). A cross-link (lanthionine (Ser-Cys)) is located at residues 26-30 (SISLC). At Ser-28 the chain carries 2,3-didehydroalanine (Ser). 4 cross-links (beta-methyllanthionine (Thr-Cys)) span residues 31–34 (TPGC), 36–42 (TGALMGC), 46–49 (TATC), and 48–51 (TCHC). Ser-56 carries the 2,3-didehydroalanine (Ser) modification.

This sequence belongs to the type A lantibiotic family. Maturation of lantibiotics involves the enzymatic conversion of Thr, and Ser into dehydrated AA and the formation of thioether bonds with cysteine. This is followed by membrane translocation and cleavage of the modified precursor. In terms of processing, the structure of the 2,3-didehydrobutyrine is not discussed in PubMed:8454055. However, in Fig. 1 the residue is diagrammed as the Z-isomer.

In terms of biological role, lanthionine-containing peptide antibiotic (lantibiotic) active on Gram-positive bacteria. The bactericidal activity of lantibiotics is based on depolarization of energized bacterial cytoplasmic membranes, initiated by the formation of aqueous transmembrane pores. The chain is Lantibiotic nisin-A (spaN) from Lactococcus lactis subsp. lactis (Streptococcus lactis).